The chain runs to 152 residues: Mediator of RNA polymerase II transcription subunit 9 (152 aa).

Residues 98 to 150 (IKRCKALLQENEEVRNLLANSIEEWENIIADKEQQLRVKAKVLRDLDARIEKI) adopt a coiled-coil conformation.

It belongs to the Mediator complex subunit 9 family. Component of the Mediator complex.

It is found in the nucleus. Functionally, component of the Mediator complex, a coactivator involved in the regulated transcription of nearly all RNA polymerase II-dependent genes. Mediator functions as a bridge to convey information from gene-specific regulatory proteins to the basal RNA polymerase II transcription machinery. Mediator is recruited to promoters by direct interactions with regulatory proteins and serves as a scaffold for the assembly of a functional preinitiation complex with RNA polymerase II and the general transcription factors. In Candida glabrata (strain ATCC 2001 / BCRC 20586 / JCM 3761 / NBRC 0622 / NRRL Y-65 / CBS 138) (Yeast), this protein is Mediator of RNA polymerase II transcription subunit 9 (CSE2).